A 782-amino-acid chain; its full sequence is Translation initiation factor IF-2 (782 aa).

A disordered region spans residues 47–196 (DNAIDGTNKK…TPPKPKELPE (150 aa)). The span at 53-65 (TNKKAEAPKKETT) shows a compositional bias: basic and acidic residues. Polar residues predominate over residues 66 to 81 (SNENGNSKGPNKPNMT). 2 stretches are compositionally biased toward low complexity: residues 82-93 (NSNEKSNKPNNP) and 118-170 (NTSK…NNKG). In terms of domain architecture, tr-type G spans 283 to 452 (ERPPVVTIMG…LLVSEVEELK (170 aa)). Residues 292-299 (GHVDHGKT) are G1. Residue 292–299 (GHVDHGKT) participates in GTP binding. The segment at 317–321 (GITQH) is G2. Residues 338-341 (DTPG) form a G3 region. GTP contacts are provided by residues 338-342 (DTPGH) and 392-395 (NKID). The G4 stretch occupies residues 392–395 (NKID). The segment at 428–430 (SAK) is G5.

This sequence belongs to the TRAFAC class translation factor GTPase superfamily. Classic translation factor GTPase family. IF-2 subfamily.

It localises to the cytoplasm. In terms of biological role, one of the essential components for the initiation of protein synthesis. Protects formylmethionyl-tRNA from spontaneous hydrolysis and promotes its binding to the 30S ribosomal subunits. Also involved in the hydrolysis of GTP during the formation of the 70S ribosomal complex. The chain is Translation initiation factor IF-2 from Listeria monocytogenes serotype 4b (strain CLIP80459).